The following is a 121-amino-acid chain: Small ribosomal subunit protein uS13 (121 aa).

A disordered region spans residues 94-121; that stretch reads GLPVRGQNTKNNARTRKGPRRTVANKKK. A compositionally biased stretch (basic residues) spans 106–121; sequence ARTRKGPRRTVANKKK.

It belongs to the universal ribosomal protein uS13 family. In terms of assembly, part of the 30S ribosomal subunit. Forms a loose heterodimer with protein S19. Forms two bridges to the 50S subunit in the 70S ribosome.

Located at the top of the head of the 30S subunit, it contacts several helices of the 16S rRNA. In the 70S ribosome it contacts the 23S rRNA (bridge B1a) and protein L5 of the 50S subunit (bridge B1b), connecting the 2 subunits; these bridges are implicated in subunit movement. Contacts the tRNAs in the A and P-sites. This Geobacillus sp. (strain WCH70) protein is Small ribosomal subunit protein uS13.